The chain runs to 171 residues: Siroheme decarboxylase NirH subunit (171 aa).

This sequence belongs to the Ahb/Nir family. In terms of assembly, probably forms a complex composed of NirD, NirL, NirG and NirH. All proteins are required for the total conversion of siroheme to didecarboxysiroheme.

It carries out the reaction siroheme + 2 H(+) = 12,18-didecarboxysiroheme + 2 CO2. The protein operates within porphyrin-containing compound metabolism. Functionally, involved in heme d1 biosynthesis. Catalyzes the decarboxylation of siroheme into didecarboxysiroheme. The protein is Siroheme decarboxylase NirH subunit of Pseudomonas aeruginosa (strain ATCC 15692 / DSM 22644 / CIP 104116 / JCM 14847 / LMG 12228 / 1C / PRS 101 / PAO1).